Consider the following 311-residue polypeptide: Eukaryotic translation initiation factor 3 subunit E (311 aa).

The 181-residue stretch at 100-280 (VYYNYPKGRD…MGVKSVSIHE (181 aa)) folds into the PCI domain.

Belongs to the eIF-3 subunit E family. Component of the eukaryotic translation initiation factor 3 (eIF-3) complex.

The protein localises to the cytoplasm. In terms of biological role, component of the eukaryotic translation initiation factor 3 (eIF-3) complex, which is involved in protein synthesis of a specialized repertoire of mRNAs and, together with other initiation factors, stimulates binding of mRNA and methionyl-tRNAi to the 40S ribosome. The eIF-3 complex specifically targets and initiates translation of a subset of mRNAs involved in cell proliferation. This chain is Eukaryotic translation initiation factor 3 subunit E, found in Caenorhabditis briggsae.